The sequence spans 161 residues: V-type proton ATPase 16 kDa proteolipid subunit c 2 (161 aa).

At 1 to 15 (MSYDLETAEHAAYAP) the chain is on the lumenal side. The chain crosses the membrane as a helical span at residues 16-36 (FFGYMGAASAQIFTVLGAAYG). Residues 37–58 (TAKSAVGICSMGVMRPELIMKS) lie on the Cytoplasmic side of the membrane. Residues 59–79 (VIPVIMAGIIGIYGLVVAMVL) form a helical membrane-spanning segment. Topologically, residues 80 to 98 (KGKVQAASAGYDLNKGFAH) are lumenal. Residues 99–119 (LAAGLTCGLCGLGAGYAIGIV) traverse the membrane as a helical segment. Topologically, residues 120–137 (GDAGVRGTAQQPRLFVGM) are cytoplasmic. The helical transmembrane segment at 138–158 (ILILIFSEVLGLYGMIVALIL) threads the bilayer. Topologically, residues 159-161 (GTS) are lumenal.

This sequence belongs to the V-ATPase proteolipid subunit family. V-ATPase is a heteromultimeric enzyme made up of two complexes: the ATP-hydrolytic V1 complex and the proton translocation V0 complex. The V1 complex consists of three catalytic AB heterodimers that form a heterohexamer, three peripheral stalks each consisting of EG heterodimers, one central rotor including subunits D and F, and the regulatory subunits C and H. The proton translocation complex V0 consists of the proton transport subunit a, a ring of proteolipid subunits c9c'', rotary subunit d, subunits e and f, and the accessory subunits vah-19/Ac45 and vah-20/PRR.

It localises to the membrane. Functionally, proton-conducting pore forming subunit of the V0 complex of vacuolar(H+)-ATPase (V-ATPase), a multisubunit enzyme composed of a peripheral complex (V1) that hydrolyzes ATP and a membrane integral complex (V0) that translocates protons. V-ATPase is responsible for acidifying and maintaining the pH of intracellular compartments and in some cell types, is targeted to the plasma membrane, where it is responsible for acidifying the extracellular environment. Involved in necrotic cell death. Required along with other vacuolar ATPase components for the removal of protein aggregates which form in immature oocytes in the distal gonad. This removal occurs as the oocytes mature and move to the proximal gonad, is triggered by the introduction of sperm through mating and occurs before fertilization. The introduction of sperm triggers V-ATPase accumulation in proximal oocytes and induces lysosomal acidification which leads to engulfing of protein aggregates by lysosomes and subsequent clearance of the aggregates. Lysosomal acidification also leads to changes in mitochondrial morphology and function. Mitochondria in distal immature oocytes are fragmented, produce high levels of reactive oxygen species (ROS) and have high membrane potential, indicative of metabolic inactivity. In contrast, mitochondria in proximal mature oocytes are tubular with lower ROS levels and membrane potential, indicative of an active metabolic state required for aggregate mobilization before clearance. The protein is V-type proton ATPase 16 kDa proteolipid subunit c 2 of Caenorhabditis briggsae.